Reading from the N-terminus, the 302-residue chain is Glycine--tRNA ligase alpha subunit (302 aa).

This sequence belongs to the class-II aminoacyl-tRNA synthetase family. Tetramer of two alpha and two beta subunits.

It localises to the cytoplasm. The catalysed reaction is tRNA(Gly) + glycine + ATP = glycyl-tRNA(Gly) + AMP + diphosphate. This is Glycine--tRNA ligase alpha subunit from Edwardsiella ictaluri (strain 93-146).